The sequence spans 68 residues: UPF0253 protein ASA_2184 (68 aa).

This sequence belongs to the UPF0253 family.

This chain is UPF0253 protein ASA_2184, found in Aeromonas salmonicida (strain A449).